The primary structure comprises 327 residues: GTPase Obg (327 aa).

The Obg domain maps to 2 to 160 (HILKDSLSIT…LNLRLELSLI (159 aa)). Positions 161–326 (ADIGLVGFPN…LVSELFALSR (166 aa)) constitute an OBG-type G domain. GTP is bound by residues 167-174 (GFPNAGKS), 192-196 (FTTRF), 213-216 (DVPG), 280-283 (NKLD), and 307-309 (SIY). Residues S174 and T194 each contribute to the Mg(2+) site.

Belongs to the TRAFAC class OBG-HflX-like GTPase superfamily. OBG GTPase family. As to quaternary structure, monomer. Requires Mg(2+) as cofactor.

It localises to the cytoplasm. An essential GTPase which binds GTP, GDP and possibly (p)ppGpp with moderate affinity, with high nucleotide exchange rates and a fairly low GTP hydrolysis rate. Plays a role in control of the cell cycle, stress response, ribosome biogenesis and in those bacteria that undergo differentiation, in morphogenesis control. The sequence is that of GTPase Obg from Borrelia hermsii (strain HS1 / DAH).